Reading from the N-terminus, the 514-residue chain is 3-octaprenyl-4-hydroxybenzoate carboxy-lyase (514 aa).

Asparagine 177 contributes to the Mn(2+) binding site. Prenylated FMN contacts are provided by residues 180–182, 194–196, and 199–200; these read IYR, RWL, and RG. Position 243 (glutamate 243) interacts with Mn(2+). Aspartate 314 (proton donor) is an active-site residue.

The protein belongs to the UbiD family. Homohexamer. It depends on prenylated FMN as a cofactor. Requires Mn(2+) as cofactor.

It is found in the cell membrane. It catalyses the reaction a 4-hydroxy-3-(all-trans-polyprenyl)benzoate + H(+) = a 2-(all-trans-polyprenyl)phenol + CO2. It participates in cofactor biosynthesis; ubiquinone biosynthesis. Functionally, catalyzes the decarboxylation of 3-octaprenyl-4-hydroxy benzoate to 2-octaprenylphenol, an intermediate step in ubiquinone biosynthesis. In Bordetella parapertussis (strain 12822 / ATCC BAA-587 / NCTC 13253), this protein is 3-octaprenyl-4-hydroxybenzoate carboxy-lyase.